Here is a 532-residue protein sequence, read N- to C-terminus: MSVTVETPLQAGPLLKEKKQELIDIKNIQEHARTVQPFKASKHQPLISGSVSKEAAIATHAALHIDLTPEKEKKIREMYDRLDADNDGSIDIRDLTQALSSQTPHIPATMAPKLLAKMKREDSDRVTYADFTNYVIAHEARLAEVFDQIDSNRDGEVDVSEIKSYCKEMGVNLDDHKALSIVKKMDQSGSSSVNLNEFQDFMLLYPSTDMREMVDFWRHNLIIDIGEDGQVPEDFTPQELQSGVWWRHLVAGGVAGAMSRTCTAPFDRIKVYLQVNSTKTNKLGVVSCVHLLHAEGGLKSFWRGNGINVIKIAPESAMKFMSYDQIKRWIQEYKGGAELTTYERLFAGSSAGAISQTAIYPMEVMKTRLALRRTGQLDRGMIHFAHKMYDKEGIRCFYKGYLPNLLGIIPYAGIDLTVYETLKSCYTQYYTEHTEPGVLALLACGTCSSTCGQLASYPLALVRTRLQARAISPKNSSQPDTMIGQFKHILQNEGFTGLYRGITPNFMKVIPAVSISYVVYEKVRKQLGATMS.

EF-hand domains follow at residues 70 to 105, 107 to 136, 137 to 172, and 173 to 208; these read EKEKKIREMYDRLDADNDGSIDIRDLTQALSSQTPH, PATMAPKLLAKMKREDSDRVTYADFTNYVI, AHEARLAEVFDQIDSNRDGEVDVSEIKSYCKEMGVN, and LDDHKALSIVKKMDQSGSSSVNLNEFQDFMLLYPST. The Ca(2+) site is built by Asp-83, Asp-85, Asp-87, Ser-89, and Asp-94. Residues Asp-150, Asn-152, Asp-154, Glu-156, and Glu-161 each contribute to the Ca(2+) site. Solcar repeat units follow at residues 243–329, 339–425, and 436–526; these read GVWW…IKRW, LTTY…LKSC, and PGVL…VRKQ. Transmembrane regions (helical) follow at residues 249–266, 304–323, 349–362, 400–419, 442–459, and 501–518; these read LVAGGVAGAMSRTCTAPF, GNGINVIKIAPESAMKFMSY, SSAGAISQTAIYPM, GYLPNLLGIIPYAGIDLTVY, LACGTCSSTCGQLASYPL, and GITPNFMKVIPAVSISYV.

Belongs to the mitochondrial carrier (TC 2.A.29) family.

Its subcellular location is the mitochondrion inner membrane. In terms of biological role, calcium-dependent mitochondrial solute carrier. In Caenorhabditis briggsae, this protein is Probable calcium-binding mitochondrial carrier CBG00135.